A 237-amino-acid polypeptide reads, in one-letter code: UPF0502 protein RB6530 (237 aa).

The segment covering 187-202 has biased composition (polar residues); it reads ASSAAPSQAESGSTSP. The disordered stretch occupies residues 187 to 211; that stretch reads ASSAAPSQAESGSTSPAKAANDDRI.

This sequence belongs to the UPF0502 family.

The chain is UPF0502 protein RB6530 from Rhodopirellula baltica (strain DSM 10527 / NCIMB 13988 / SH1).